The sequence spans 246 residues: Uridylate kinase (246 aa).

11–14 (KISG) serves as a coordination point for ATP. A UMP-binding site is contributed by glycine 53. The ATP site is built by glycine 54 and arginine 58. UMP-binding positions include aspartate 74 and 135 to 142 (TGSPYLTT). The ATP site is built by threonine 162, tyrosine 169, and aspartate 172.

It belongs to the UMP kinase family. As to quaternary structure, homohexamer.

The protein resides in the cytoplasm. The enzyme catalyses UMP + ATP = UDP + ADP. The protein operates within pyrimidine metabolism; CTP biosynthesis via de novo pathway; UDP from UMP (UMPK route): step 1/1. With respect to regulation, inhibited by UTP. In terms of biological role, catalyzes the reversible phosphorylation of UMP to UDP. The chain is Uridylate kinase from Chlamydia abortus (strain DSM 27085 / S26/3) (Chlamydophila abortus).